We begin with the raw amino-acid sequence, 1546 residues long: DNA-directed RNA polymerase subunit beta' (1546 aa).

Positions 57, 59, 72, and 75 each coordinate Zn(2+). Positions 756, 758, and 760 each coordinate Mg(2+). Positions 1130, 1211, 1218, and 1221 each coordinate Zn(2+). The tract at residues 1512-1546 (LEKYGEGSTSSDAVTGGQRYDDTRPGSSINPGYGD) is disordered. Over residues 1536 to 1546 (PGSSINPGYGD) the composition is skewed to polar residues.

The protein belongs to the RNA polymerase beta' chain family. In terms of assembly, the RNAP catalytic core consists of 2 alpha, 1 beta, 1 beta' and 1 omega subunit. When a sigma factor is associated with the core the holoenzyme is formed, which can initiate transcription. Mg(2+) serves as cofactor. The cofactor is Zn(2+).

It catalyses the reaction RNA(n) + a ribonucleoside 5'-triphosphate = RNA(n+1) + diphosphate. Its function is as follows. DNA-dependent RNA polymerase catalyzes the transcription of DNA into RNA using the four ribonucleoside triphosphates as substrates. The chain is DNA-directed RNA polymerase subunit beta' from Deinococcus radiodurans (strain ATCC 13939 / DSM 20539 / JCM 16871 / CCUG 27074 / LMG 4051 / NBRC 15346 / NCIMB 9279 / VKM B-1422 / R1).